Reading from the N-terminus, the 215-residue chain is BAG family molecular chaperone regulator 5, mitochondrial (215 aa).

The transit peptide at 1-14 directs the protein to the mitochondrion; sequence MKRSRKFSSSTTTT. The IQ domain occupies 50–79; it reads ATAAAARIQSGYRSYRIRNLYKKISSINRE. The region spanning 72 to 149 is the BAG domain; that stretch reads KISSINREAN…GMQEILDSIS (78 aa).

In terms of assembly, binds to the ATPase domain of HSP70/HSC70 chaperones. Interacts with HSP70-1.

Its subcellular location is the mitochondrion. Its function is as follows. Co-chaperone that regulates diverse cellular pathways, such as programmed cell death and stress responses. This Arabidopsis thaliana (Mouse-ear cress) protein is BAG family molecular chaperone regulator 5, mitochondrial (BAG5).